Reading from the N-terminus, the 314-residue chain is Putative S-adenosyl-L-methionine-dependent methyltransferase MAP_0256 (314 aa).

Residues aspartate 132 and 161–162 each bind S-adenosyl-L-methionine; that span reads DL.

The protein belongs to the UPF0677 family.

Functionally, exhibits S-adenosyl-L-methionine-dependent methyltransferase activity. This is Putative S-adenosyl-L-methionine-dependent methyltransferase MAP_0256 from Mycolicibacterium paratuberculosis (strain ATCC BAA-968 / K-10) (Mycobacterium paratuberculosis).